The primary structure comprises 537 residues: 6-phosphogluconate dehydrogenase, decarboxylating 2, chloroplastic (537 aa).

Residues methionine 1–serine 44 constitute a chloroplast transit peptide. NADP(+) is bound by residues glycine 55–glycine 60, asparagine 78–threonine 80, valine 122–alanine 124, and asparagine 150. Residues asparagine 150 and serine 176 to glycine 178 each bind substrate. Lysine 230 functions as the Proton acceptor in the catalytic mechanism. Residue histidine 233 to asparagine 234 participates in substrate binding. Catalysis depends on glutamate 237, which acts as the Proton donor. Substrate contacts are provided by tyrosine 238, lysine 308, arginine 335, arginine 500, and histidine 506.

This sequence belongs to the 6-phosphogluconate dehydrogenase family. As to quaternary structure, homodimer.

Its subcellular location is the plastid. It localises to the chloroplast. The enzyme catalyses 6-phospho-D-gluconate + NADP(+) = D-ribulose 5-phosphate + CO2 + NADPH. It participates in carbohydrate degradation; pentose phosphate pathway; D-ribulose 5-phosphate from D-glucose 6-phosphate (oxidative stage): step 3/3. Its function is as follows. Catalyzes the oxidative decarboxylation of 6-phosphogluconate to ribulose 5-phosphate and CO(2), with concomitant reduction of NADP to NADPH. The protein is 6-phosphogluconate dehydrogenase, decarboxylating 2, chloroplastic of Spinacia oleracea (Spinach).